We begin with the raw amino-acid sequence, 151 residues long: Transcription antitermination protein NusB (151 aa).

Belongs to the NusB family.

Its function is as follows. Involved in transcription antitermination. Required for transcription of ribosomal RNA (rRNA) genes. Binds specifically to the boxA antiterminator sequence of the ribosomal RNA (rrn) operons. The protein is Transcription antitermination protein NusB of Thermodesulfovibrio yellowstonii (strain ATCC 51303 / DSM 11347 / YP87).